Here is a 241-residue protein sequence, read N- to C-terminus: Thiamine import ATP-binding protein ThiQ (241 aa).

The 229-residue stretch at 7-235 (IRLSDVRFSY…AGPEALRHYI (229 aa)) folds into the ABC transporter domain. 37 to 44 (GPSGSGKS) provides a ligand contact to ATP.

The protein belongs to the ABC transporter superfamily. Thiamine importer (TC 3.A.1.19.1) family. As to quaternary structure, the complex is composed of two ATP-binding proteins (ThiQ), two transmembrane proteins (ThiP) and a solute-binding protein (ThiB).

It localises to the cell inner membrane. The enzyme catalyses thiamine(out) + ATP + H2O = thiamine(in) + ADP + phosphate + H(+). Functionally, part of the ABC transporter complex ThiBPQ involved in thiamine import. Responsible for energy coupling to the transport system. In Brucella melitensis biotype 1 (strain ATCC 23456 / CCUG 17765 / NCTC 10094 / 16M), this protein is Thiamine import ATP-binding protein ThiQ.